The primary structure comprises 29 residues: Cytochrome b6-f complex subunit 8 (29 aa).

The helical transmembrane segment at 3 to 23 threads the bilayer; that stretch reads TVSIAWAALMVIFTFSISLVV.

It belongs to the PetN family. In terms of assembly, the 4 large subunits of the cytochrome b6-f complex are cytochrome b6, subunit IV (17 kDa polypeptide, PetD), cytochrome f and the Rieske protein, while the 4 small subunits are PetG, PetL, PetM and PetN. The complex functions as a dimer.

The protein localises to the plastid. The protein resides in the chloroplast thylakoid membrane. Functionally, component of the cytochrome b6-f complex, which mediates electron transfer between photosystem II (PSII) and photosystem I (PSI), cyclic electron flow around PSI, and state transitions. The protein is Cytochrome b6-f complex subunit 8 of Psilotum nudum (Whisk fern).